Reading from the N-terminus, the 336-residue chain is D-alanine--D-alanine ligase (336 aa).

One can recognise an ATP-grasp domain in the interval 124–330 (KMWFSALGIP…FATFLEQAIL (207 aa)). Residue 154-209 (AFDEWGSVFIKAASQGSSVGCFPAHRREDIPGLVRKAFEYAPFVVVEKTIKARELE) coordinates ATP. Asp-284, Glu-297, and Asn-299 together coordinate Mg(2+).

The protein belongs to the D-alanine--D-alanine ligase family. It depends on Mg(2+) as a cofactor. Mn(2+) serves as cofactor.

Its subcellular location is the cytoplasm. It carries out the reaction 2 D-alanine + ATP = D-alanyl-D-alanine + ADP + phosphate + H(+). The protein operates within cell wall biogenesis; peptidoglycan biosynthesis. Functionally, cell wall formation. This is D-alanine--D-alanine ligase from Shewanella amazonensis (strain ATCC BAA-1098 / SB2B).